Reading from the N-terminus, the 198-residue chain is Interferon gamma (198 aa).

A signal peptide spans 1–23 (MMVSTARAVVCLSLCLCVCQVRG). N-linked (GlcNAc...) asparagine glycans are attached at residues asparagine 31, asparagine 42, and asparagine 174. The interval 173–198 (SNNTKMQRRRRRRRRQARKVKTPTRA) is disordered. The segment covering 178-198 (MQRRRRRRRRQARKVKTPTRA) has biased composition (basic residues).

This sequence belongs to the type II (or gamma) interferon family. Homodimer.

Its subcellular location is the secreted. Its function is as follows. Cytokine which binds to interferon gamma receptor 1 (ifngr1). Also binds with lower affinity to interferon gamma receptor 1-like (ifngr1l). Has activating effects on macrophages and neutrophils. The protein is Interferon gamma of Paralichthys olivaceus (Bastard halibut).